The following is a 402-amino-acid chain: CCA-adding enzyme (402 aa).

Positions 32 and 35 each coordinate ATP. Residues Gly32 and Arg35 each contribute to the CTP site. Asp45 and Asp47 together coordinate Mg(2+). Arg116, Asp159, Arg162, Arg165, and Arg168 together coordinate ATP. 5 residues coordinate CTP: Arg116, Asp159, Arg162, Arg165, and Arg168.

The protein belongs to the tRNA nucleotidyltransferase/poly(A) polymerase family. Bacterial CCA-adding enzyme type 3 subfamily. Homodimer. Requires Mg(2+) as cofactor.

It catalyses the reaction a tRNA precursor + 2 CTP + ATP = a tRNA with a 3' CCA end + 3 diphosphate. The catalysed reaction is a tRNA with a 3' CCA end + 2 CTP + ATP = a tRNA with a 3' CCACCA end + 3 diphosphate. Its function is as follows. Catalyzes the addition and repair of the essential 3'-terminal CCA sequence in tRNAs without using a nucleic acid template. Adds these three nucleotides in the order of C, C, and A to the tRNA nucleotide-73, using CTP and ATP as substrates and producing inorganic pyrophosphate. tRNA 3'-terminal CCA addition is required both for tRNA processing and repair. Also involved in tRNA surveillance by mediating tandem CCA addition to generate a CCACCA at the 3' terminus of unstable tRNAs. While stable tRNAs receive only 3'-terminal CCA, unstable tRNAs are marked with CCACCA and rapidly degraded. This Streptococcus thermophilus (strain CNRZ 1066) protein is CCA-adding enzyme.